Here is a 489-residue protein sequence, read N- to C-terminus: Lysine--tRNA ligase (489 aa).

Residues Glu399 and Glu406 each contribute to the Mg(2+) site.

The protein belongs to the class-II aminoacyl-tRNA synthetase family. As to quaternary structure, homodimer. Mg(2+) serves as cofactor.

It is found in the cytoplasm. It catalyses the reaction tRNA(Lys) + L-lysine + ATP = L-lysyl-tRNA(Lys) + AMP + diphosphate. The sequence is that of Lysine--tRNA ligase from Roseiflexus sp. (strain RS-1).